Reading from the N-terminus, the 727-residue chain is 5'-AMP-activated serine/threonine-protein kinase catalytic subunit alpha (727 aa).

One can recognise a Protein kinase domain in the interval 31-284; that stretch reads YRLDKTLGIG…IHEIRNHPWF (254 aa). ATP contacts are provided by residues 37–45 and Lys60; that span reads LGIGSFGKV. The Proton acceptor role is filled by Asp154. Thr188 carries the post-translational modification Phosphothreonine. A disordered region spans residues 382–590; it reads FTTTTGFNPS…GSNNNSYEGG (209 aa). Composition is skewed to low complexity over residues 391 to 483 and 494 to 586; these read SNSN…SSIS and NLNN…NNNS. The region spanning 679-727 is the KA1 domain; sequence RMVNGKPIKLVLQLFRVAENRYLLDIKKIEGEIFIFFDICSLMLEELNL.

Belongs to the protein kinase superfamily. CAMK Ser/Thr protein kinase family. SNF1 subfamily. Heterotrimer of an alpha catalytic subunit, a beta and a gamma non-catalytic subunits.

The catalysed reaction is L-seryl-[protein] + ATP = O-phospho-L-seryl-[protein] + ADP + H(+). It carries out the reaction L-threonyl-[protein] + ATP = O-phospho-L-threonyl-[protein] + ADP + H(+). Functionally, activated enzyme phosphorylates target proteins and initiates downstream signaling pathways that shift metabolism from anabolic to catabolic pathways. Acts as a highly sensitive cellular energy sensor. In Dictyostelium discoideum (Social amoeba), this protein is 5'-AMP-activated serine/threonine-protein kinase catalytic subunit alpha (snfA).